The chain runs to 261 residues: Thioredoxin-like protein HCF164, chloroplastic (261 aa).

A chloroplast-targeting transit peptide spans 1-40 (MARLVFSLNLPSSHGFNLSPRNLQSFFVTQTGAPRFRAVR). The segment at 39 to 91 (VRCKPNPESSETKQEKLVIDNGETSSASKEVESSSSVADSSSSSSSGFPESPN) is disordered. The span at 63 to 84 (SSASKEVESSSSVADSSSSSSS) shows a compositional bias: low complexity. Residues 101–229 (VTVIAALSLF…LVENVNALAA (129 aa)) form the Thioredoxin domain. Active-site nucleophile residues include Cys150 and Cys153. A disulfide bridge links Cys150 with Cys153.

The protein belongs to the thioredoxin family. In terms of assembly, interacts in vitro with LTO1.

It is found in the plastid. It localises to the chloroplast thylakoid membrane. Its function is as follows. Thiol-disulfide oxidoreductase that participates in various redox reactions in the chloroplast. Mediates the reduction of PSI-N in the thylakoid lumen. May interact and probably reduce other target proteins of the thylakoid membrane, such as FTSH2, FTSH8, LHCB5, atpA, atpB, atpE, petA and petC. Involved in the biogenesis of the plastid cytochrome b6f complex. Reducing equivalents are provided by stromal M-type thioredoxins and probably transduced through the thylakoid membrane by CCDA. Possesses low insulin disulfide bonds reducing activity. The chain is Thioredoxin-like protein HCF164, chloroplastic from Arabidopsis thaliana (Mouse-ear cress).